The following is a 64-amino-acid chain: Translation machinery-associated protein 7 homolog (64 aa).

A disordered region spans residues 1-64 (MTGREGGKKK…TGGIKKSGKK (64 aa)). Residues 21-50 (EMDEEDMAFKQKQKEQQKAMEAAKQKAAKG) adopt a coiled-coil conformation. Over residues 27–44 (MAFKQKQKEQQKAMEAAK) the composition is skewed to basic and acidic residues.

The protein belongs to the TMA7 family.

This is Translation machinery-associated protein 7 homolog from Aedes aegypti (Yellowfever mosquito).